The following is a 258-amino-acid chain: Phosphate import ATP-binding protein PstB (258 aa).

In terms of domain architecture, ABC transporter spans 5 to 253 (LDLNDVNIYY…PTKKETEDYI (249 aa)). 37 to 44 (GPSGCGKS) serves as a coordination point for ATP.

Belongs to the ABC transporter superfamily. Phosphate importer (TC 3.A.1.7) family. The complex is composed of two ATP-binding proteins (PstB), two transmembrane proteins (PstC and PstA) and a solute-binding protein (PstS).

It is found in the cell membrane. It catalyses the reaction phosphate(out) + ATP + H2O = ADP + 2 phosphate(in) + H(+). Part of the ABC transporter complex PstSACB involved in phosphate import. Responsible for energy coupling to the transport system. The protein is Phosphate import ATP-binding protein PstB of Corynebacterium jeikeium (strain K411).